The sequence spans 63 residues: Mu-like prophage FluMu protein gp38 (63 aa).

The protein to phage Mu protein gp38.

The sequence is that of Mu-like prophage FluMu protein gp38 from Haemophilus influenzae (strain ATCC 51907 / DSM 11121 / KW20 / Rd).